We begin with the raw amino-acid sequence, 212 residues long: Regulatory protein RecX (212 aa).

This sequence belongs to the RecX family.

The protein resides in the cytoplasm. Modulates RecA activity. In Clostridioides difficile (strain 630) (Peptoclostridium difficile), this protein is Regulatory protein RecX.